Reading from the N-terminus, the 290-residue chain is MQIISDPHAMQAISENVRLQGKRLAVVMTMGALHEGHISLVTLARKSADTVIMTLFVNPTQFSAGEDLERYPRPFEQDVAHAEAAGVDYLFAPTSAEMYPAGHQTSVQCGALAERFEGAHRSGHFNGVATVVTKLLHITKPHTAIFGEKDAQQLAIIRQLVADLLIDVEIIGAPIVREADGLAKSSRNIYLSSNERKRATVLYGGLCHAKARLAEGEQNLKLIATEVEALITATEGCTIDYVAFVDEATFLPIEQADASKRYRLLLAVRLGSVRLIDNMVMGTKDSYKPC.

ATP is bound at residue 30-37; it reads MGALHEGH. Residue histidine 37 is the Proton donor of the active site. Glutamine 61 is a binding site for (R)-pantoate. Residue glutamine 61 coordinates beta-alanine. Position 147–150 (147–150) interacts with ATP; sequence GEKD. Glutamine 153 is a binding site for (R)-pantoate. Residues valine 176 and 184 to 187 contribute to the ATP site; that span reads KSSR.

It belongs to the pantothenate synthetase family. As to quaternary structure, homodimer.

It is found in the cytoplasm. The enzyme catalyses (R)-pantoate + beta-alanine + ATP = (R)-pantothenate + AMP + diphosphate + H(+). Its pathway is cofactor biosynthesis; (R)-pantothenate biosynthesis; (R)-pantothenate from (R)-pantoate and beta-alanine: step 1/1. Functionally, catalyzes the condensation of pantoate with beta-alanine in an ATP-dependent reaction via a pantoyl-adenylate intermediate. The polypeptide is Pantothenate synthetase (Chlorobium chlorochromatii (strain CaD3)).